A 133-amino-acid polypeptide reads, in one-letter code: Protein NrdI (133 aa).

Belongs to the NrdI family.

In terms of biological role, probably involved in ribonucleotide reductase function. The protein is Protein NrdI of Escherichia coli O17:K52:H18 (strain UMN026 / ExPEC).